Here is a 108-residue protein sequence, read N- to C-terminus: Resistin (108 aa).

Residues 1–18 (MKALCLLLLPVLGLLVSS) form the signal peptide. 5 disulfide bridges follow: C51–C104, C63–C103, C72–C89, C74–C91, and C78–C93.

It belongs to the resistin/FIZZ family. In terms of assembly, homodimer; disulfide-linked. Interacts with DEFA1. Expressed in white adipose tissue (at protein level). Widely expressed, with particularly strong expression in lung, bone marrow, breast and peripheral blood. Expressed strongly in bone marrow and at lower levels in lung, but not detected in other tissues. Isoform 2 is detected in adipose tissue, bone marrow, brain, lung, peripheral blood, placenta and thymus.

The protein localises to the secreted. Hormone that seems to suppress insulin ability to stimulate glucose uptake into adipose cells. Potentially links obesity to diabetes. Promotes chemotaxis in myeloid cells. The protein is Resistin (RETN) of Homo sapiens (Human).